Here is a 56-residue protein sequence, read N- to C-terminus: Ribosome biogenesis protein Nop10 (56 aa).

This sequence belongs to the NOP10 family.

Its function is as follows. Involved in ribosome biogenesis; more specifically in 18S rRNA pseudouridylation and in cleavage of pre-rRNA. In Methanococcoides burtonii (strain DSM 6242 / NBRC 107633 / OCM 468 / ACE-M), this protein is Ribosome biogenesis protein Nop10.